The following is a 391-amino-acid chain: MSRVGVVLLNLGGPERIQDVGPFLFNLFADPEIIRLPIPALQKPLAWLISTLRSGKSQEAYRSIGGGSPLRRITEQQARELQSLLRQRGIDATSYVAMRYWHPFTESAVADLKADGMDQVVVLPLYPHFSISTSGSSFRELQRLRQGDESFEKLPIRCIRSWFDHPGYVRAMAELIAEEVRQSDDPTQAHVFFSAHGVPKSYVEEAGDPYQKEIESCTDLIMKELGQLMGHDNPFTLAYQSRVGPVEWLKPYTEEALEELGKAKTNDLVVVPISFVSEHIETLEEIDIEYRELATEAGVVNFRRVRALDTYPPFIEGLADLVTTSLEGPEVSLDAAAELPTKVKLYPQEKWEWGWNNSSEVWNGRLAMLGFSGFLLELISGHGPLHALGLL.

His196 and Glu281 together coordinate Fe cation.

Belongs to the ferrochelatase family.

It is found in the cytoplasm. It catalyses the reaction heme b + 2 H(+) = protoporphyrin IX + Fe(2+). It functions in the pathway porphyrin-containing compound metabolism; protoheme biosynthesis; protoheme from protoporphyrin-IX: step 1/1. Functionally, catalyzes the ferrous insertion into protoporphyrin IX. This is Ferrochelatase from Synechococcus sp. (strain WH7803).